We begin with the raw amino-acid sequence, 139 residues long: Large ribosomal subunit protein uL16 (139 aa).

Positions 1–17 (MLQPKRTKYRKQQKGRM) are enriched in basic residues. The tract at residues 1 to 25 (MLQPKRTKYRKQQKGRMKGLSQRGH) is disordered.

The protein belongs to the universal ribosomal protein uL16 family. Part of the 50S ribosomal subunit.

Its function is as follows. Binds 23S rRNA and is also seen to make contacts with the A and possibly P site tRNAs. The sequence is that of Large ribosomal subunit protein uL16 from Christiangramia forsetii (strain DSM 17595 / CGMCC 1.15422 / KT0803) (Gramella forsetii).